We begin with the raw amino-acid sequence, 485 residues long: Probable protein phosphatase 2C 3 (485 aa).

A compositionally biased stretch (low complexity) spans 1–11 (MSSPSPSSEAA). Disordered regions lie at residues 1–29 (MSSPSPSSEAAAAHHHHHQRRQHAGAAGG) and 43–72 (ARAERPMGSGSRICARDEEDGGGGGGAEGG). Residues 13–23 (AHHHHHQRRQH) are compositionally biased toward basic residues. One can recognise a PPM-type phosphatase domain in the interval 107-353 (SSSSSSSLAS…DDTTCIVVDM (247 aa)). Mn(2+) contacts are provided by Asp129, Gly130, Asp305, and Asp344.

The protein belongs to the PP2C family. Requires Mg(2+) as cofactor. The cofactor is Mn(2+).

It catalyses the reaction O-phospho-L-seryl-[protein] + H2O = L-seryl-[protein] + phosphate. It carries out the reaction O-phospho-L-threonyl-[protein] + H2O = L-threonyl-[protein] + phosphate. In Oryza sativa subsp. japonica (Rice), this protein is Probable protein phosphatase 2C 3.